Here is a 349-residue protein sequence, read N- to C-terminus: Homeobox-leucine zipper protein HOX7 (349 aa).

The disordered stretch occupies residues 42-186 (RATRRDEQDD…PKQKSDLANR (145 aa)). 2 stretches are compositionally biased toward polar residues: residues 89–99 (SAETGSANSEM) and 121–135 (SSPSSMQEASTRQQV). Residues 150 to 209 (GARKKLRLSKEQSSFLEDSFKEHSTLTPKQKSDLANRLNLRPRQVEVWFQNRRARTKLKQ) constitute a DNA-binding region (homeobox). Over residues 167 to 183 (DSFKEHSTLTPKQKSDL) the composition is skewed to basic and acidic residues. Residues 208 to 252 (KQTEVDCEHLKRCCERLTRENRRLQREVAELRGTLRTTTSSYPPL) form a leucine-zipper region.

Belongs to the HD-ZIP homeobox family. Class II subfamily. Homodimer. May form a heterodimer with HOX1, HOX2 or HOX3. In terms of tissue distribution, expressed in seedlings, roots, leaves, nodes, internodes, flowers and embryo.

Its subcellular location is the nucleus. Probable transcription factor that binds to the DNA sequence 5'-CAAT[GC]ATTG-3'. The sequence is that of Homeobox-leucine zipper protein HOX7 (HOX7) from Oryza sativa subsp. japonica (Rice).